Here is a 294-residue protein sequence, read N- to C-terminus: uncharacterized protein (294 aa).

This is an uncharacterized protein from Mycoplasma pneumoniae (strain ATCC 29342 / M129 / Subtype 1) (Mycoplasmoides pneumoniae).